Reading from the N-terminus, the 297-residue chain is E3 ubiquitin-protein ligase TRIM52 (297 aa).

Residues 20 to 62 (CAICLDYFKDPVSISCGHNFCRGCVTQLWSKEDEEDQNEEEDE) form an RING-type; degenerate zinc finger. An important for rapid proteolytic degradation by the proteasome region spans residues 72–167 (VGAMDGWDGS…DEDEDEELYP (96 aa)). The segment at 222–263 (NDQGMCFKHQEALKLFCEVDKEAICVVCRESRSHKQHSVLPL) adopts a B box-type zinc-finger fold. Residues cysteine 227, histidine 230, cysteine 249, and histidine 255 each contribute to the Zn(2+) site.

The protein belongs to the TRIM/RBCC family. As to quaternary structure, (Microbial infection) Interacts with Japanese encephalitis virus non-structural protein 2 (NS2A); mediates the ubiquitination of NS2A, targeting it for proteasome-mediated degradation. In terms of processing, autoubiquitinated. Polyubiquitinated. Undergoes extremely rapid proteolytic degradation by the proteasome.

The protein resides in the cytoplasm. The protein localises to the cytosol. Its subcellular location is the nucleus. The enzyme catalyses S-ubiquitinyl-[E2 ubiquitin-conjugating enzyme]-L-cysteine + [acceptor protein]-L-lysine = [E2 ubiquitin-conjugating enzyme]-L-cysteine + N(6)-ubiquitinyl-[acceptor protein]-L-lysine.. The protein operates within protein modification; protein ubiquitination. Its function is as follows. E3 ubiquitin-protein ligase. Positively regulates the NF-kappa-B signaling pathway. Functionally, (Microbial infection) Exhibits antiviral activity against Japanese encephalitis virus (JEV). Ubiquitinates the viral non-structural protein 2 (NS2A) and targets it for proteasome-mediated degradation. The chain is E3 ubiquitin-protein ligase TRIM52 (TRIM52) from Homo sapiens (Human).